A 194-amino-acid chain; its full sequence is Amidophosphoribosyltransferase (194 aa).

A propeptide spanning residues 1-11 is cleaved from the precursor; sequence MPHEPKGLNEE. The active-site Nucleophile is the C12. The Glutamine amidotransferase type-2 domain occupies 12–194; that stretch reads CGVFGVWGNP…PHGFRPMVVG (183 aa).

In the C-terminal section; belongs to the purine/pyrimidine phosphoribosyltransferase family.

It catalyses the reaction 5-phospho-beta-D-ribosylamine + L-glutamate + diphosphate = 5-phospho-alpha-D-ribose 1-diphosphate + L-glutamine + H2O. It participates in purine metabolism; IMP biosynthesis via de novo pathway; N(1)-(5-phospho-D-ribosyl)glycinamide from 5-phospho-alpha-D-ribose 1-diphosphate: step 1/2. Functionally, catalyzes the formation of phosphoribosylamine from phosphoribosylpyrophosphate (PRPP) and glutamine. The polypeptide is Amidophosphoribosyltransferase (Lacticaseibacillus casei (Lactobacillus casei)).